We begin with the raw amino-acid sequence, 217 residues long: tRNA (guanine-N(7)-)-methyltransferase (217 aa).

4 residues coordinate S-adenosyl-L-methionine: Glu-44, Glu-69, Asp-96, and Asp-118. Residue Asp-118 is part of the active site. Substrate is bound by residues Lys-122, Asp-154, and 191-194 (TEYE).

The protein belongs to the class I-like SAM-binding methyltransferase superfamily. TrmB family.

The catalysed reaction is guanosine(46) in tRNA + S-adenosyl-L-methionine = N(7)-methylguanosine(46) in tRNA + S-adenosyl-L-homocysteine. It participates in tRNA modification; N(7)-methylguanine-tRNA biosynthesis. Catalyzes the formation of N(7)-methylguanine at position 46 (m7G46) in tRNA. The chain is tRNA (guanine-N(7)-)-methyltransferase from Bacillus thuringiensis (strain Al Hakam).